A 486-amino-acid chain; its full sequence is Glutamyl-tRNA(Gln) amidotransferase subunit A (486 aa).

Residues Lys74 and Ser149 each act as charge relay system in the active site. Ser173 acts as the Acyl-ester intermediate in catalysis.

The protein belongs to the amidase family. GatA subfamily. Heterotrimer of A, B and C subunits.

It carries out the reaction L-glutamyl-tRNA(Gln) + L-glutamine + ATP + H2O = L-glutaminyl-tRNA(Gln) + L-glutamate + ADP + phosphate + H(+). Its function is as follows. Allows the formation of correctly charged Gln-tRNA(Gln) through the transamidation of misacylated Glu-tRNA(Gln) in organisms which lack glutaminyl-tRNA synthetase. The reaction takes place in the presence of glutamine and ATP through an activated gamma-phospho-Glu-tRNA(Gln). In Prochlorococcus marinus (strain MIT 9303), this protein is Glutamyl-tRNA(Gln) amidotransferase subunit A.